Here is a 363-residue protein sequence, read N- to C-terminus: 5-formaminoimidazole-4-carboxamide-1-(beta)-D-ribofuranosyl 5'-monophosphate synthetase (363 aa).

5-amino-1-(5-phospho-beta-D-ribosyl)imidazole-4-carboxamide contacts are provided by His29 and Ser96. Residues 118-354 form the ATP-grasp domain; that stretch reads RDILRWEAER…ISREIKNAIE (237 aa). Residues 148–210 and Glu232 contribute to the ATP site; that span reads PEDI…TNFC. Asn260 serves as a coordination point for 5-amino-1-(5-phospho-beta-D-ribosyl)imidazole-4-carboxamide. Residues Gln299 and Glu312 each contribute to the Mg(2+) site.

The protein belongs to the phosphohexose mutase family. The cofactor is Mg(2+). Requires Mn(2+) as cofactor.

It catalyses the reaction 5-amino-1-(5-phospho-beta-D-ribosyl)imidazole-4-carboxamide + formate + ATP = 5-formamido-1-(5-phospho-D-ribosyl)imidazole-4-carboxamide + ADP + phosphate. It participates in purine metabolism; IMP biosynthesis via de novo pathway; 5-formamido-1-(5-phospho-D-ribosyl)imidazole-4-carboxamide from 5-amino-1-(5-phospho-D-ribosyl)imidazole-4-carboxamide (formate route): step 1/1. Functionally, catalyzes the ATP- and formate-dependent formylation of 5-aminoimidazole-4-carboxamide-1-beta-d-ribofuranosyl 5'-monophosphate (AICAR) to 5-formaminoimidazole-4-carboxamide-1-beta-d-ribofuranosyl 5'-monophosphate (FAICAR) in the absence of folates. The protein is 5-formaminoimidazole-4-carboxamide-1-(beta)-D-ribofuranosyl 5'-monophosphate synthetase of Methanosphaera stadtmanae (strain ATCC 43021 / DSM 3091 / JCM 11832 / MCB-3).